A 466-amino-acid polypeptide reads, in one-letter code: Phosphoenolpyruvate carboxykinase (ATP) (466 aa).

Residues Arg61, Tyr196, and Lys202 each contribute to the substrate site. Residues Lys202, His221, and 237 to 245 (GLSGTGKTT) contribute to the ATP site. Mn(2+) contacts are provided by Lys202 and His221. Residue Asp258 coordinates Mn(2+). ATP contacts are provided by Glu286, Arg323, and Thr448. Arg323 provides a ligand contact to substrate.

The protein belongs to the phosphoenolpyruvate carboxykinase (ATP) family. The cofactor is Mn(2+).

The protein localises to the cytoplasm. The catalysed reaction is oxaloacetate + ATP = phosphoenolpyruvate + ADP + CO2. The protein operates within carbohydrate biosynthesis; gluconeogenesis. Functionally, involved in the gluconeogenesis. Catalyzes the conversion of oxaloacetate (OAA) to phosphoenolpyruvate (PEP) through direct phosphoryl transfer between the nucleoside triphosphate and OAA. This is Phosphoenolpyruvate carboxykinase (ATP) from Deinococcus radiodurans (strain ATCC 13939 / DSM 20539 / JCM 16871 / CCUG 27074 / LMG 4051 / NBRC 15346 / NCIMB 9279 / VKM B-1422 / R1).